The sequence spans 339 residues: DNA-directed RNA polymerase subunit alpha (339 aa).

Positions 1 to 235 (MTIQKNWQEL…DQLNVFVNFE (235 aa)) are alpha N-terminal domain (alpha-NTD). The segment at 251–339 (FNPAFLKKVD…ELAKRFEDHY (89 aa)) is alpha C-terminal domain (alpha-CTD).

Belongs to the RNA polymerase alpha chain family. As to quaternary structure, homodimer. The RNAP catalytic core consists of 2 alpha, 1 beta, 1 beta' and 1 omega subunit. When a sigma factor is associated with the core the holoenzyme is formed, which can initiate transcription.

It catalyses the reaction RNA(n) + a ribonucleoside 5'-triphosphate = RNA(n+1) + diphosphate. In terms of biological role, DNA-dependent RNA polymerase catalyzes the transcription of DNA into RNA using the four ribonucleoside triphosphates as substrates. This Afipia carboxidovorans (strain ATCC 49405 / DSM 1227 / KCTC 32145 / OM5) (Oligotropha carboxidovorans) protein is DNA-directed RNA polymerase subunit alpha.